Reading from the N-terminus, the 199-residue chain is Zinc finger matrin-type protein 2 (199 aa).

Alanine 2 is subject to N-acetylalanine. Glycyl lysine isopeptide (Lys-Gly) (interchain with G-Cter in SUMO2) cross-links involve residues lysine 8, lysine 36, lysine 39, lysine 45, lysine 55, lysine 61, lysine 64, lysine 70, lysine 102, and lysine 123. Residues 27 to 46 (KRLTEEREKKDGKPVQPVKR) form a disordered region. The Matrin-type zinc-finger motif lies at 80–104 (YYCNVCDCVVKDSINFLDHINGKKH). The span at 150 to 173 (REEEEKAKAYKKEKQKEKKRRAEE) shows a compositional bias: basic and acidic residues. Positions 150–175 (REEEEKAKAYKKEKQKEKKRRAEEDL) are disordered.

In terms of assembly, component of the spliceosome B complex.

It is found in the nucleus. Its function is as follows. Involved in pre-mRNA splicing as a component of the spliceosome. This chain is Zinc finger matrin-type protein 2 (ZMAT2), found in Homo sapiens (Human).